Consider the following 237-residue polypeptide: MSIHISARVGDIADKILLPGDPLRAKFIAENFLEDAVCFNEIRGMLGYTGTYKGHRVSVMGTGMGMPSISIYARELIVDYGVKTLIRVGTAGSIDPNVHVRELVLAQAAATNSNIIRNDFPEFDFPQIADFGLLDIAYHIAKDLGMTTHVGSVLSSDVFYSNMPERNMALGKLGVKAIEMEAAALYYLAAQHQVKALGIMTISDNLNDPSEDTSAEERQTTFTDMMKVGLETLIAND.

H4 is a binding site for a purine D-ribonucleoside. Phosphate-binding positions include G20, R24, R43, and 87–90; that span reads RVGT. A purine D-ribonucleoside contacts are provided by residues 179 to 181 and 203 to 204; these read EME and SD. The active-site Proton donor is D204.

It belongs to the PNP/UDP phosphorylase family. Homohexamer; trimer of homodimers.

It catalyses the reaction a purine D-ribonucleoside + phosphate = a purine nucleobase + alpha-D-ribose 1-phosphate. It carries out the reaction a purine 2'-deoxy-D-ribonucleoside + phosphate = a purine nucleobase + 2-deoxy-alpha-D-ribose 1-phosphate. Catalyzes the reversible phosphorolytic breakdown of the N-glycosidic bond in the beta-(deoxy)ribonucleoside molecules, with the formation of the corresponding free purine bases and pentose-1-phosphate. The polypeptide is Purine nucleoside phosphorylase DeoD-type (Streptococcus uberis (strain ATCC BAA-854 / 0140J)).